A 504-amino-acid polypeptide reads, in one-letter code: Glycerol kinase (504 aa).

Thr13 lines the ADP pocket. ATP contacts are provided by Thr13, Thr14, and Ser15. Thr13 contributes to the sn-glycerol 3-phosphate binding site. ADP is bound at residue Arg17. 3 residues coordinate sn-glycerol 3-phosphate: Arg83, Glu84, and Tyr135. Residues Arg83, Glu84, and Tyr135 each contribute to the glycerol site. His231 bears the Phosphohistidine; by HPr mark. A sn-glycerol 3-phosphate-binding site is contributed by Asp245. Positions 245 and 246 each coordinate glycerol. Thr267 and Gly310 together coordinate ADP. ATP contacts are provided by Thr267, Gly310, Gln314, and Gly411. ADP contacts are provided by Gly411 and Asn415.

Belongs to the FGGY kinase family. As to quaternary structure, homotetramer and homodimer (in equilibrium). Post-translationally, the phosphoenolpyruvate-dependent sugar phosphotransferase system (PTS), including enzyme I, and histidine-containing protein (HPr) are required for the phosphorylation, which leads to the activation of the enzyme.

It catalyses the reaction glycerol + ATP = sn-glycerol 3-phosphate + ADP + H(+). The protein operates within polyol metabolism; glycerol degradation via glycerol kinase pathway; sn-glycerol 3-phosphate from glycerol: step 1/1. Its activity is regulated as follows. Activated by phosphorylation and inhibited by fructose 1,6-bisphosphate (FBP). In terms of biological role, key enzyme in the regulation of glycerol uptake and metabolism. Catalyzes the phosphorylation of glycerol to yield sn-glycerol 3-phosphate. The sequence is that of Glycerol kinase from Ligilactobacillus salivarius (strain UCC118) (Lactobacillus salivarius).